Here is a 681-residue protein sequence, read N- to C-terminus: Mating-type protein beta1-1 (681 aa).

Positions 165 to 227 (DKNEPTSPTP…DARRRIGWNE (63 aa)) form a DNA-binding region, homeobox; TALE-type. The span at 307–318 (LKNDEARRKREA) shows a compositional bias: basic and acidic residues. Disordered regions lie at residues 307 to 341 (LKND…SPAS), 353 to 381 (AIDS…SPLC), and 394 to 466 (SPVK…SDPF). The segment covering 413 to 430 (TSAAPSPQPSLLPKLTPT) has biased composition (low complexity).

The protein belongs to the TALE/M-ATYP homeobox family. May dimerize.

It is found in the nucleus. In terms of biological role, has a major regulatory role in sexual and asexual development. It may bind DNA itself or it may have a role in preventing DNA-binding of another protein. The chain is Mating-type protein beta1-1 from Coprinopsis cinerea (Inky cap fungus).